A 178-amino-acid polypeptide reads, in one-letter code: Cytochrome b6-f complex iron-sulfur subunit (178 aa).

Residues 20–42 (LLTFGTATGVALGALYPVANYFM) traverse the membrane as a helical segment. Positions 65-161 (KTGWLANHQA…VDVDDDAVLV (97 aa)) constitute a Rieske domain. Residues cysteine 107, histidine 109, cysteine 125, and histidine 128 each contribute to the [2Fe-2S] cluster site. Cysteines 112 and 127 form a disulfide.

The protein belongs to the Rieske iron-sulfur protein family. The 4 large subunits of the cytochrome b6-f complex are cytochrome b6, subunit IV (17 kDa polypeptide, PetD), cytochrome f and the Rieske protein, while the 4 small subunits are PetG, PetL, PetM and PetN. The complex functions as a dimer. Requires [2Fe-2S] cluster as cofactor.

The protein resides in the cellular thylakoid membrane. The enzyme catalyses 2 oxidized [plastocyanin] + a plastoquinol + 2 H(+)(in) = 2 reduced [plastocyanin] + a plastoquinone + 4 H(+)(out). In terms of biological role, component of the cytochrome b6-f complex, which mediates electron transfer between photosystem II (PSII) and photosystem I (PSI), cyclic electron flow around PSI, and state transitions. The protein is Cytochrome b6-f complex iron-sulfur subunit of Prochlorococcus marinus (strain MIT 9515).